The chain runs to 470 residues: Negative regulator of sexual conjugation and meiosis (470 aa).

In terms of domain architecture, Protein kinase spans 18–295; that stretch reads LRFVSIIGAG…ITLPELSTLV (278 aa). ATP contacts are provided by residues 24 to 32 and K47; that span reads IGAGAYGVV. D143 acts as the Proton acceptor in catalysis. Residue S469 is modified to Phosphoserine.

The protein belongs to the protein kinase superfamily. Ser/Thr protein kinase family.

It carries out the reaction L-seryl-[protein] + ATP = O-phospho-L-seryl-[protein] + ADP + H(+). The enzyme catalyses L-threonyl-[protein] + ATP = O-phospho-L-threonyl-[protein] + ADP + H(+). Its function is as follows. This protein is a negative regulator of both sexual conjugation and meiosis. It phosphorylates mei2. It blocks the onset of meiosis until conjugation takes place. This Schizosaccharomyces pombe (strain 972 / ATCC 24843) (Fission yeast) protein is Negative regulator of sexual conjugation and meiosis (ran1).